The sequence spans 91 residues: uncharacterized protein (91 aa).

A run of 2 helical transmembrane segments spans residues 10 to 30 and 46 to 66; these read VLFT…AGGI and LLVA…QALS. The interval 68–91 is disordered; that stretch reads MRRQDGARGTARAGRNSARRRMPS.

It localises to the cell membrane. This is an uncharacterized protein from Sinorhizobium fredii (strain NBRC 101917 / NGR234).